A 272-amino-acid polypeptide reads, in one-letter code: NAD kinase (272 aa).

The active-site Proton acceptor is D62. Residues 62–63 (DG), R67, 129–130 (NE), R140, K157, D159, 170–175 (SSYSSS), A194, and Q229 each bind NAD(+).

The protein belongs to the NAD kinase family. It depends on a divalent metal cation as a cofactor.

The protein resides in the cytoplasm. The catalysed reaction is NAD(+) + ATP = ADP + NADP(+) + H(+). Involved in the regulation of the intracellular balance of NAD and NADP, and is a key enzyme in the biosynthesis of NADP. Catalyzes specifically the phosphorylation on 2'-hydroxyl of the adenosine moiety of NAD to yield NADP. This is NAD kinase from Thermoplasma volcanium (strain ATCC 51530 / DSM 4299 / JCM 9571 / NBRC 15438 / GSS1).